The sequence spans 812 residues: Valine--tRNA ligase (812 aa).

The short motif at 46–56 (PTVSGQLHIGH) is the 'HIGH' region element. The 'KMSKS' region motif lies at 536 to 540 (KMSKS). Lysine 539 provides a ligand contact to ATP.

It belongs to the class-I aminoacyl-tRNA synthetase family. ValS type 2 subfamily. As to quaternary structure, monomer.

The protein localises to the cytoplasm. It catalyses the reaction tRNA(Val) + L-valine + ATP = L-valyl-tRNA(Val) + AMP + diphosphate. Functionally, catalyzes the attachment of valine to tRNA(Val). As ValRS can inadvertently accommodate and process structurally similar amino acids such as threonine, to avoid such errors, it has a 'posttransfer' editing activity that hydrolyzes mischarged Thr-tRNA(Val) in a tRNA-dependent manner. The protein is Valine--tRNA ligase of Rickettsia bellii (strain RML369-C).